Here is a 379-residue protein sequence, read N- to C-terminus: Cytochrome b (379 aa).

Helical transmembrane passes span 33–53, 77–98, 113–133, and 178–198; these read FGSLLGVCLMIQILTGLFLAM, WLIRYLHANGASMFFICLFIHV, WNIGIILFLTTMATAFVGYVL, and FFAFHFILPFIITAFVLVHLL. The heme b site is built by His-83 and His-97. Positions 182 and 196 each coordinate heme b. Position 201 (His-201) interacts with a ubiquinone. Transmembrane regions (helical) follow at residues 226–246, 288–308, 320–340, and 347–367; these read IKDLLGILFLLMALMILALFF, LGGVLALLLSIIILAAFPLLN, VTQTIYWIFIANLLVLTWIGG, and FTMIGQIASVIYFATIIVLMP.

The protein belongs to the cytochrome b family. The cytochrome bc1 complex contains 11 subunits: 3 respiratory subunits (MT-CYB, CYC1 and UQCRFS1), 2 core proteins (UQCRC1 and UQCRC2) and 6 low-molecular weight proteins (UQCRH/QCR6, UQCRB/QCR7, UQCRQ/QCR8, UQCR10/QCR9, UQCR11/QCR10 and a cleavage product of UQCRFS1). This cytochrome bc1 complex then forms a dimer. The cofactor is heme b.

It localises to the mitochondrion inner membrane. Functionally, component of the ubiquinol-cytochrome c reductase complex (complex III or cytochrome b-c1 complex) that is part of the mitochondrial respiratory chain. The b-c1 complex mediates electron transfer from ubiquinol to cytochrome c. Contributes to the generation of a proton gradient across the mitochondrial membrane that is then used for ATP synthesis. This Akodon iniscatus (Intelligent grass mouse) protein is Cytochrome b (MT-CYB).